The chain runs to 174 residues: uncharacterized protein (174 aa).

Belongs to the mimivirus L39/R874 family.

This is an uncharacterized protein from Acanthamoeba polyphaga (Amoeba).